We begin with the raw amino-acid sequence, 524 residues long: MSDPFFTRPEHRKRKARSATSKREKENQKLERNGPANEDLASISSESEFNGFEDEIDEENEDTYETAAEKRLRLAREYLDEVKNELVEDGGFDAKEVDRELLASRLKEDVLEKKGQMYLDYTSKINPDVKIETAQLRGRHMRPLVGVVAYENFVYSADKSGLIQKWEALQEKDTENRENDDHEIGKAIKLHFRPIKFSRSRRGENDHVKEITCLAISNDGRWIVTGGLDHRIVIRDSVTLEPQHCWKHHRDAVMGLAMRRGTNEMFSCSADRSIKVWSLDQMSYIETLFGHQDVIFGVDALARERCVSVGGRDRTSRLWKIVEESQLVFRSGGTSMKATAGYMEGSVDCVAMIDEDHFVTGSDNGVIALWSVQRKKPLFTYPLAHGLDPILAPGRHSAETSPDPVTIPPQPRWITSLAAIPYSNLFASGSWDGNIRLWKIAEGLRSFEPLTIATPLSVYGCINSLSLSLQGKGKQSEVRVFAACGRETRVGRWKTLRGIPNSGFVFNIPLTVIPSVTDGDEIDE.

Positions 1–65 are disordered; the sequence is MSDPFFTRPE…IDEENEDTYE (65 aa). Residues 21 to 32 are compositionally biased toward basic and acidic residues; that stretch reads SKREKENQKLER. Residues 51-64 are compositionally biased toward acidic residues; that stretch reads GFEDEIDEENEDTY. WD repeat units follow at residues 131 to 176, 206 to 245, 248 to 287, 290 to 329, 342 to 380, 409 to 448, and 457 to 503; these read IETA…DTEN, DHVKEITCLAISNDGRWIVTGGLDHRIVIRDSVTLEPQHC, HHRDAVMGLAMRRGTNEMFSCSADRSIKVWSLDQMSYIET, GHQDVIFGVDALARERCVSVGGRDRTSRLWKIVEESQLVF, YMEGSVDCVAMIDEDHFVTGSDNGVIALWSVQRKKPLFT, PQPRWITSLAAIPYSNLFASGSWDGNIRLWKIAEGLRSFE, and SVYG…PNSG.

The protein resides in the nucleus. This is an uncharacterized protein from Schizosaccharomyces pombe (strain 972 / ATCC 24843) (Fission yeast).